An 856-amino-acid chain; its full sequence is Wall-associated receptor kinase 17 (856 aa).

A signal peptide spans 1 to 42 (MPSRSPACRPRGRNRRSAADAVARPLALALILVSTLPRAAHS). 2 N-linked (GlcNAc...) asparagine glycosylation sites follow: N171 and N234. One can recognise an EGF-like 1 domain in the interval 297-334 (FEKLCKYGTCVDAPTGAGYLCKCPSGYDGNPYVSDGCQ). 5 disulfides stabilise this stretch: C301–C306, C319–C333, C339–C353, C347–C362, and C364–C379. Residues 335 to 380 (DINECRNYNSNNCTYQNLCNNTLGGYTCSCPENNIGDGYRTGTGCN) enclose the EGF-like 2; calcium-binding domain. N-linked (GlcNAc...) asparagine glycosylation is found at N346 and N354. An N-linked (GlcNAc...) asparagine glycan is attached at N380. The chain crosses the membrane as a helical span at residues 452–470 (VLGVSLVLMVTTTTAASCY). The Protein kinase domain maps to 527–805 (YSESRILGRG…VLQELRRSFT (279 aa)). Residues 533–541 (LGRGGQGTV) and K555 each bind ATP. The active-site Proton acceptor is the D652. The segment at 816 to 844 (SIQENSEQEEKHLHESRSIPSLQSSEVST) is disordered. Residues 823–832 (QEEKHLHESR) are compositionally biased toward basic and acidic residues. Polar residues predominate over residues 833–844 (SIPSLQSSEVST).

Belongs to the protein kinase superfamily. Ser/Thr protein kinase family. In terms of assembly, interacts with WAK17 isoform 2; the interaction is direct. Interacts with LRR5; the interaction is direct. As to quaternary structure, interacts with WAK17 isoform 1; the interaction is direct. (Microbial infection) Interacts with G.zeae CFEM1 (via CFEM domain); the interaction is direct. Interacts with G.zeae CFEMN1; the interaction is direct. Interacts with G.zeae CFEM5; the interaction is direct. It depends on Mn(2+) as a cofactor. Mg(2+) is required as a cofactor.

It localises to the cell membrane. The catalysed reaction is L-seryl-[protein] + ATP = O-phospho-L-seryl-[protein] + ADP + H(+). The enzyme catalyses L-threonyl-[protein] + ATP = O-phospho-L-threonyl-[protein] + ADP + H(+). Kinase that contributes to activation of the hypersensitive response, a form of programmed cell death, upon fungal infection. Its function is as follows. Secreted protein that contributes to activation of the hypersensitive response, a form of programmed cell death, upon fungal infection. May sense the presence of fungal material and relay the signal to WAK17 isoform 1. The sequence is that of Wall-associated receptor kinase 17 from Zea mays (Maize).